Consider the following 454-residue polypeptide: MALNVVILAAGKGTRMRSDLPKVLHPIAHKSMVQHVIDTAHQLGSEAIQLVYGYGADKLQARLGEQALNWVLQAEQLGTGHAVAQANDNIGDDDTVLILYGDVPLIQVSTLEALLAARDANGLAILTVNLHDPTGYGRIVREAGKVVGIVEQKDANEEQLKINEINTGIMAAPGKQLKAWLGQLSSDNAQGEYYLTDIVAMAHSDGVSITTAQPESAIEVEGANNRVQLAQLERAYQARAAEKLMLEGANLRDPARIDVRGEVTVGMDVMIDVNVVFQGKVTIGNNVTIGAGAILIDCEIGDNAEIKPYSIIENAIVGEAASAGPFARLRPGAELKRDAHIGNFVEMKKAVLGEGSKAGHLAYIGDAQVGAGVNIGAGTITCNYDGANKHLTVIEDDVFVGSDTQLVAPVTIGKGATLGAGSTITRDVAADELVITRVKQRHLTGWTRPVKQKK.

The tract at residues 1 to 226 is pyrophosphorylase; it reads MALNVVILAA…AIEVEGANNR (226 aa). UDP-N-acetyl-alpha-D-glucosamine contacts are provided by residues 8–11, lysine 22, glutamine 73, 78–79, 100–102, glycine 137, glutamate 151, asparagine 166, and asparagine 224; these read LAAG, GT, and YGD. Aspartate 102 is a binding site for Mg(2+). Asparagine 224 is a Mg(2+) binding site. A linker region spans residues 227–247; it reads VQLAQLERAYQARAAEKLMLE. The segment at 248 to 454 is N-acetyltransferase; the sequence is GANLRDPARI…GWTRPVKQKK (207 aa). UDP-N-acetyl-alpha-D-glucosamine-binding residues include arginine 330 and lysine 348. Histidine 360 functions as the Proton acceptor in the catalytic mechanism. Residues tyrosine 363 and asparagine 374 each contribute to the UDP-N-acetyl-alpha-D-glucosamine site. Residues alanine 377, 383–384, serine 402, alanine 420, and arginine 437 contribute to the acetyl-CoA site; that span reads NY.

This sequence in the N-terminal section; belongs to the N-acetylglucosamine-1-phosphate uridyltransferase family. It in the C-terminal section; belongs to the transferase hexapeptide repeat family. As to quaternary structure, homotrimer. The cofactor is Mg(2+).

It is found in the cytoplasm. The enzyme catalyses alpha-D-glucosamine 1-phosphate + acetyl-CoA = N-acetyl-alpha-D-glucosamine 1-phosphate + CoA + H(+). It carries out the reaction N-acetyl-alpha-D-glucosamine 1-phosphate + UTP + H(+) = UDP-N-acetyl-alpha-D-glucosamine + diphosphate. It participates in nucleotide-sugar biosynthesis; UDP-N-acetyl-alpha-D-glucosamine biosynthesis; N-acetyl-alpha-D-glucosamine 1-phosphate from alpha-D-glucosamine 6-phosphate (route II): step 2/2. It functions in the pathway nucleotide-sugar biosynthesis; UDP-N-acetyl-alpha-D-glucosamine biosynthesis; UDP-N-acetyl-alpha-D-glucosamine from N-acetyl-alpha-D-glucosamine 1-phosphate: step 1/1. Its pathway is bacterial outer membrane biogenesis; LPS lipid A biosynthesis. Functionally, catalyzes the last two sequential reactions in the de novo biosynthetic pathway for UDP-N-acetylglucosamine (UDP-GlcNAc). The C-terminal domain catalyzes the transfer of acetyl group from acetyl coenzyme A to glucosamine-1-phosphate (GlcN-1-P) to produce N-acetylglucosamine-1-phosphate (GlcNAc-1-P), which is converted into UDP-GlcNAc by the transfer of uridine 5-monophosphate (from uridine 5-triphosphate), a reaction catalyzed by the N-terminal domain. The chain is Bifunctional protein GlmU from Shewanella loihica (strain ATCC BAA-1088 / PV-4).